We begin with the raw amino-acid sequence, 101 residues long: MSQKIRIKLKSYDHMLVDKSAEKIVKTVKSTGAVVTGPIPLPTHKKLFTVLRSPHVNKKAREQFEVMSYKRLIDIYSSSSKTIDALMKLELPSGVEVEIKV.

This sequence belongs to the universal ribosomal protein uS10 family. In terms of assembly, part of the 30S ribosomal subunit.

In terms of biological role, involved in the binding of tRNA to the ribosomes. The protein is Small ribosomal subunit protein uS10 of Flavobacterium psychrophilum (strain ATCC 49511 / DSM 21280 / CIP 103535 / JIP02/86).